A 537-amino-acid chain; its full sequence is uncharacterized protein (537 aa).

Disordered regions lie at residues 1–33 (MEPG…ILAF), 71–98 (SSPP…RKRQ), 197–220 (SHNN…SEEK), and 516–537 (GRQR…EEQN). Residue Ser-72 is modified to Phosphoserine. The span at 88 to 98 (SRVDSEARKRQ) shows a compositional bias: basic and acidic residues. The span at 197–214 (SHNNMASSNTQSNTQLSE) shows a compositional bias: polar residues. A compositionally biased stretch (basic residues) spans 516 to 529 (GRQRSSRYKSHVHK).

Belongs to the NAD kinase family.

This is an uncharacterized protein from Schizosaccharomyces pombe (strain 972 / ATCC 24843) (Fission yeast).